Consider the following 88-residue polypeptide: Mitochondrial import inner membrane translocase subunit tim9 (88 aa).

The short motif at 35 to 59 is the Twin CX3C motif element; that stretch reads CFTACVDDFTSKALSGRESGCISRC. 2 cysteine pairs are disulfide-bonded: Cys35/Cys59 and Cys39/Cys55.

It belongs to the small Tim family. Heterohexamer; composed of 3 copies of tim9 and 3 copies of tim10, named soluble 70 kDa complex. Associates with the tim22 complex, whose core is composed of tim22 and tim54. Interacts with the transmembrane regions of multi-pass transmembrane proteins in transit.

The protein localises to the mitochondrion inner membrane. Functionally, mitochondrial intermembrane chaperone that participates in the import and insertion of multi-pass transmembrane proteins into the mitochondrial inner membrane. Also required for the transfer of beta-barrel precursors from the TOM complex to the sorting and assembly machinery (SAM complex) of the outer membrane. Acts as a chaperone-like protein that protects the hydrophobic precursors from aggregation and guide them through the mitochondrial intermembrane space. This Neurospora crassa (strain ATCC 24698 / 74-OR23-1A / CBS 708.71 / DSM 1257 / FGSC 987) protein is Mitochondrial import inner membrane translocase subunit tim9 (tim9).